Here is a 147-residue protein sequence, read N- to C-terminus: Large ribosomal subunit protein uL15 (147 aa).

Residues 1–13 are compositionally biased toward basic and acidic residues; that stretch reads MKLENLKSKEGSR. Positions 1–54 are disordered; sequence MKLENLKSKEGSRHKTKRVGRGFGSGIGKTSTRGSKGQKSRKSGHTRPGFEGGQ. Positions 36-45 are enriched in basic residues; that stretch reads KGQKSRKSGH.

This sequence belongs to the universal ribosomal protein uL15 family. As to quaternary structure, part of the 50S ribosomal subunit.

Its function is as follows. Binds to the 23S rRNA. This is Large ribosomal subunit protein uL15 from Malacoplasma penetrans (strain HF-2) (Mycoplasma penetrans).